The chain runs to 405 residues: Acetylornithine/succinyldiaminopimelate aminotransferase (405 aa).

Pyridoxal 5'-phosphate is bound by residues 107–108 and Phe140; that span reads GA. Residue Arg143 coordinates N(2)-acetyl-L-ornithine. 225 to 228 serves as a coordination point for pyridoxal 5'-phosphate; it reads DEVQ. N6-(pyridoxal phosphate)lysine is present on Lys254. Thr282 is a N(2)-acetyl-L-ornithine binding site. Thr283 lines the pyridoxal 5'-phosphate pocket.

It belongs to the class-III pyridoxal-phosphate-dependent aminotransferase family. ArgD subfamily. Homodimer. It depends on pyridoxal 5'-phosphate as a cofactor.

It localises to the cytoplasm. It carries out the reaction N(2)-acetyl-L-ornithine + 2-oxoglutarate = N-acetyl-L-glutamate 5-semialdehyde + L-glutamate. It catalyses the reaction N-succinyl-(2S,6S)-2,6-diaminopimelate + 2-oxoglutarate = (S)-2-succinylamino-6-oxoheptanedioate + L-glutamate. It participates in amino-acid biosynthesis; L-arginine biosynthesis; N(2)-acetyl-L-ornithine from L-glutamate: step 4/4. The protein operates within amino-acid biosynthesis; L-lysine biosynthesis via DAP pathway; LL-2,6-diaminopimelate from (S)-tetrahydrodipicolinate (succinylase route): step 2/3. Its function is as follows. Involved in both the arginine and lysine biosynthetic pathways. This Yersinia pestis protein is Acetylornithine/succinyldiaminopimelate aminotransferase.